The sequence spans 398 residues: MQKRLTLLGSTGSIGDSTLDVVARHPERFSVYALTAHRNGDKLVEQCLRFAPEVAVVGDAATAAHVEAKLRAAGSKTTVLYGPQALVDVSASDGCDTVVAAIVGAAGLAPSLAAARAGKRILLANKESLVMSGGIFMDAVRDHGAILLPVDSEHNAIFQCMPRDENEHGGISKIILTASGGPFRTREPATLADVTPDEACKHPNWVMGRKISVDSATMMNKGLEVIEAHWIFGLPGERIDVLIHPQSVIHSLVSYRDGSVLAQLGNPDMRTPIAHALAFPERVDAGVDQLDLAQIAQLSFEKPDYARFPCLALALKALEEGGIASAALNAANEVAVEAFLERRIGFMAIAATVDAVLNALPNRSPNGLDDVLAADADARRLAAGFIAKAPAPRVERIV.

Residues T11, G12, S13, I14, R38, N39, and N125 each coordinate NADPH. K126 provides a ligand contact to 1-deoxy-D-xylulose 5-phosphate. Position 127 (E127) interacts with NADPH. D151 serves as a coordination point for Mn(2+). 1-deoxy-D-xylulose 5-phosphate contacts are provided by S152, E153, S179, and H202. E153 contributes to the Mn(2+) binding site. An NADPH-binding site is contributed by G208. 4 residues coordinate 1-deoxy-D-xylulose 5-phosphate: S215, N220, K221, and E224. E224 lines the Mn(2+) pocket.

Belongs to the DXR family. Mg(2+) serves as cofactor. It depends on Mn(2+) as a cofactor.

It catalyses the reaction 2-C-methyl-D-erythritol 4-phosphate + NADP(+) = 1-deoxy-D-xylulose 5-phosphate + NADPH + H(+). Its pathway is isoprenoid biosynthesis; isopentenyl diphosphate biosynthesis via DXP pathway; isopentenyl diphosphate from 1-deoxy-D-xylulose 5-phosphate: step 1/6. Catalyzes the NADPH-dependent rearrangement and reduction of 1-deoxy-D-xylulose-5-phosphate (DXP) to 2-C-methyl-D-erythritol 4-phosphate (MEP). In Burkholderia vietnamiensis (strain G4 / LMG 22486) (Burkholderia cepacia (strain R1808)), this protein is 1-deoxy-D-xylulose 5-phosphate reductoisomerase.